Reading from the N-terminus, the 536-residue chain is Light-independent protochlorophyllide reductase subunit B (536 aa).

Asp36 lines the [4Fe-4S] cluster pocket. Asp274 serves as the catalytic Proton donor. Substrate is bound at residue Gly409 to Leu410. A disordered region spans residues Asp426–Ala448.

This sequence belongs to the ChlB/BchB/BchZ family. In terms of assembly, protochlorophyllide reductase is composed of three subunits; BchL, BchN and BchB. Forms a heterotetramer of two BchB and two BchN subunits. [4Fe-4S] cluster is required as a cofactor.

The catalysed reaction is chlorophyllide a + oxidized 2[4Fe-4S]-[ferredoxin] + 2 ADP + 2 phosphate = protochlorophyllide a + reduced 2[4Fe-4S]-[ferredoxin] + 2 ATP + 2 H2O. It participates in porphyrin-containing compound metabolism; bacteriochlorophyll biosynthesis (light-independent). Component of the dark-operative protochlorophyllide reductase (DPOR) that uses Mg-ATP and reduced ferredoxin to reduce ring D of protochlorophyllide (Pchlide) to form chlorophyllide a (Chlide). This reaction is light-independent. The NB-protein (BchN-BchB) is the catalytic component of the complex. The polypeptide is Light-independent protochlorophyllide reductase subunit B (Cereibacter sphaeroides (strain KD131 / KCTC 12085) (Rhodobacter sphaeroides)).